The following is a 398-amino-acid chain: Histidinol-phosphate aminotransferase (398 aa).

The segment covering 1-10 (MTGQRATPQP) has biased composition (polar residues). The tract at residues 1 to 30 (MTGQRATPQPTLDDLPLRDDLRGKSPYGAP) is disordered. Lysine 234 carries the post-translational modification N6-(pyridoxal phosphate)lysine.

It belongs to the class-II pyridoxal-phosphate-dependent aminotransferase family. Histidinol-phosphate aminotransferase subfamily. As to quaternary structure, homodimer. Pyridoxal 5'-phosphate is required as a cofactor.

The catalysed reaction is L-histidinol phosphate + 2-oxoglutarate = 3-(imidazol-4-yl)-2-oxopropyl phosphate + L-glutamate. It functions in the pathway amino-acid biosynthesis; L-histidine biosynthesis; L-histidine from 5-phospho-alpha-D-ribose 1-diphosphate: step 7/9. This chain is Histidinol-phosphate aminotransferase, found in Mycobacterium avium (strain 104).